A 223-amino-acid polypeptide reads, in one-letter code: UPF0441 protein YgiB (223 aa).

The segment covering 178–195 (TVPKTAMAPKPATTTTVT) has biased composition (low complexity). The interval 178–223 (TVPKTAMAPKPATTTTVTRGGFGESIAKQSTMQRSATGTSSRSMGG) is disordered. A compositionally biased stretch (polar residues) spans 204–223 (AKQSTMQRSATGTSSRSMGG).

It belongs to the UPF0441 family.

The sequence is that of UPF0441 protein YgiB from Shigella boydii serotype 4 (strain Sb227).